The primary structure comprises 125 residues: 17 kDa gas vesicle protein (125 aa).

Belongs to the gas vesicle GvpC family.

It is found in the gas vesicle. In terms of biological role, gas vesicles (GV) are hollow, gas filled proteinaceous nanostructures. During planktonic growth they allow positioning of the organism at a favorable depth for light or nutrient acquisition. This Dactylococcopsis salina (strain PCC 8305) (Myxobactron salinum) protein is 17 kDa gas vesicle protein.